Here is a 1265-residue protein sequence, read N- to C-terminus: Protein diaphanous homolog 1 (1265 aa).

N-acetylmethionine is present on M1. Residues 1 to 12 (MEPSGGGLGPGR) show a composition bias toward gly residues. 2 disordered regions span residues 1–42 (MEPS…FTLK) and 54–83 (SMRI…TAQS). S22 carries the post-translational modification Phosphoserine. The span at 54 to 65 (SMRIKKEKEKPN) shows a compositional bias: basic and acidic residues. A compositionally biased stretch (polar residues) spans 67–83 (AHRNSSASYGDDPTAQS). The 366-residue stretch at 84-449 (LQDISDDQVL…QIVLHKNGTD (366 aa)) folds into the GBD/FH3 domain. Residues 474–568 (VEKSEAKATE…KKEMASLSAV (95 aa)) are a coiled coil. A disordered region spans residues 573–742 (SVSSSAAVPQ…PPPPGMGVPP (170 aa)). Pro residues-rich tracts occupy residues 594-628 (IPPP…PPLP) and 645-742 (IPPP…GVPP). In terms of domain architecture, FH1 spans 625–757 (PPLPGGACIS…FGIPAAPVLP (133 aa)). T761 carries the post-translational modification Phosphothreonine. The FH2 domain occupies 762 to 1164 (PKKVYKPEVQ…MRRAKLAKEK (403 aa)). An N6-acetyllysine mark is found at K1050 and K1096. The residue at position 1114 (Y1114) is a Phosphotyrosine. Residues 1141 to 1185 (AVKENQKRRETEEKMRRAKLAKEKAEKERLEKQQKREQLIDMNAE) adopt a coiled-coil conformation. Residues 1187–1215 (DETGVMDSLLEALQSGAAFRRKRGPRQVN) form the DAD domain. S1247 carries the phosphoserine modification.

Belongs to the formin homology family. Diaphanous subfamily. Homodimer. Interacts with the GTP-bound form of RHOA. Interacts with RHOC, PFY1, MAPRE1, BAIAP2 and APC. Interacts with SCAI. Interacts with DCAF7, via FH2 domain. Interacts with NCDN. Interacts with OSBPL10, OSBPL2, VIM, TUBB and DYN1. Phosphorylation at Thr-761 is stimulated by cAMP and regulates stability, complex formation and mitochondrial movement. As to expression, expressed in testis. Present in Sertoli cells (at protein level).

It is found in the cell membrane. The protein localises to the cell projection. It localises to the ruffle membrane. The protein resides in the cytoplasm. Its subcellular location is the cytoskeleton. It is found in the microtubule organizing center. The protein localises to the centrosome. It localises to the spindle. The protein resides in the nucleus. Actin nucleation and elongation factor required for the assembly of F-actin structures, such as actin cables and stress fibers. Binds to the barbed end of the actin filament and slows down actin polymerization and depolymerization. Required for cytokinesis, and transcriptional activation of the serum response factor. DFR proteins couple Rho and Src tyrosine kinase during signaling and the regulation of actin dynamics. Functions as a scaffold protein for MAPRE1 and APC to stabilize microtubules and promote cell migration. Has neurite outgrowth promoting activity. Acts in a Rho-dependent manner to recruit PFY1 to the membrane. The MEMO1-RHOA-DIAPH1 signaling pathway plays an important role in ERBB2-dependent stabilization of microtubules at the cell cortex. It controls the localization of APC and CLASP2 to the cell membrane, via the regulation of GSK3B activity. In turn, membrane-bound APC allows the localization of the MACF1 to the cell membrane, which is required for microtubule capture and stabilization. Plays a role in the regulation of cell morphology and cytoskeletal organization. Required in the control of cell shape. Also acts as an actin nucleation and elongation factor in the nucleus by promoting nuclear actin polymerization inside the nucleus to drive serum-dependent SRF-MRTFA activity. The sequence is that of Protein diaphanous homolog 1 from Rattus norvegicus (Rat).